The chain runs to 450 residues: tRNA modification GTPase MnmE (450 aa).

Residues arginine 20, glutamate 78, and lysine 117 each coordinate (6S)-5-formyl-5,6,7,8-tetrahydrofolate. The TrmE-type G domain occupies 211–372 (GLRMVIVGKP…LEESIYRETQ (162 aa)). Asparagine 221 lines the K(+) pocket. Residues 221–226 (NVGKST), 240–246 (TDIPGTT), and 265–268 (DTAG) each bind GTP. Mg(2+) is bound at residue serine 225. K(+) is bound by residues threonine 240, isoleucine 242, and threonine 245. Threonine 246 is a Mg(2+) binding site. Lysine 450 lines the (6S)-5-formyl-5,6,7,8-tetrahydrofolate pocket.

It belongs to the TRAFAC class TrmE-Era-EngA-EngB-Septin-like GTPase superfamily. TrmE GTPase family. In terms of assembly, homodimer. Heterotetramer of two MnmE and two MnmG subunits. Requires K(+) as cofactor.

It localises to the cytoplasm. In terms of biological role, exhibits a very high intrinsic GTPase hydrolysis rate. Involved in the addition of a carboxymethylaminomethyl (cmnm) group at the wobble position (U34) of certain tRNAs, forming tRNA-cmnm(5)s(2)U34. The chain is tRNA modification GTPase MnmE from Thermotoga sp. (strain RQ2).